Here is a 153-residue protein sequence, read N- to C-terminus: UPF0311 protein RPA1785 (153 aa).

The protein belongs to the UPF0311 family.

The sequence is that of UPF0311 protein RPA1785 from Rhodopseudomonas palustris (strain ATCC BAA-98 / CGA009).